A 163-amino-acid polypeptide reads, in one-letter code: MMNKITHYFKSLLLLELLGGLWLTLKYTFKPKYTVLYPMEKFPQSPRFRGLHALRRYPNGEERCIACKLCEAVCPALAITIDSAKREDGTRRTTRYDIDLFKCIFCGFCEESCPVDSIVETHILEYHFEKRGENIVNKPQLLAIGDRLEAEIAERRAADAAFR.

4Fe-4S ferredoxin-type domains are found at residues 54-84 and 94-123; these read LRRY…IDSA and TRYD…ETHI. 8 residues coordinate [4Fe-4S] cluster: Cys64, Cys67, Cys70, Cys74, Cys103, Cys106, Cys109, and Cys113.

It belongs to the complex I 23 kDa subunit family. As to quaternary structure, NDH-1 is composed of 14 different subunits. Subunits NuoA, H, J, K, L, M, N constitute the membrane sector of the complex. The cofactor is [4Fe-4S] cluster.

It localises to the cell inner membrane. It carries out the reaction a quinone + NADH + 5 H(+)(in) = a quinol + NAD(+) + 4 H(+)(out). Its function is as follows. NDH-1 shuttles electrons from NADH, via FMN and iron-sulfur (Fe-S) centers, to quinones in the respiratory chain. The immediate electron acceptor for the enzyme in this species is believed to be ubiquinone. Couples the redox reaction to proton translocation (for every two electrons transferred, four hydrogen ions are translocated across the cytoplasmic membrane), and thus conserves the redox energy in a proton gradient. This Xanthomonas campestris pv. campestris (strain 8004) protein is NADH-quinone oxidoreductase subunit I.